Reading from the N-terminus, the 134-residue chain is TSC22 domain family protein 3 (134 aa).

The AP1-binding stretch occupies residues 1-60; it reads MNTEMYQTPMEVAVYQLHNFSISFFSSLLGGDVVSVKLDNSASGASVVALDNKIEQAMDL. The leucine-zipper stretch occupies residues 76 to 97; the sequence is LKEQIRELVEKNSQLERENTLL. Residues 101–134 form a disordered region; the sequence is ASPEQLEKFQSRLSPEEPAPEAPETPEAPGGSAV. Phosphoserine is present on Ser102. Phosphothreonine is present on Thr125. The span at 125-134 shows a compositional bias: low complexity; that stretch reads TPEAPGGSAV.

It belongs to the TSC-22/Dip/Bun family. Can form homodimers, however it is likely to function as a monomer. Interacts with NFKB1. Interacts (via N-terminus) with JUN and FOS; these interactions inhibit the binding of active AP1 to its target DNA. Interacts with MYOD1. Interacts with HDAC1; this interaction affects HDAC1 activity on MYOG promoter and thus inhibits MYOD1 transcriptional activity.

It is found in the cytoplasm. Its subcellular location is the nucleus. Protects T-cells from IL2 deprivation-induced apoptosis through the inhibition of FOXO3A transcriptional activity that leads to the down-regulation of the pro-apoptotic factor BCL2L11. In macrophages, plays a role in the anti-inflammatory and immunosuppressive effects of glucocorticoids and IL10. In T-cells, inhibits anti-CD3-induced NFKB1 nuclear translocation and thereby NFKB1 DNA-binding activities. In vitro, suppresses AP-1 transcription factor complex DNA-binding activities. The protein is TSC22 domain family protein 3 (Tsc22d3) of Rattus norvegicus (Rat).